Reading from the N-terminus, the 684-residue chain is uncharacterized protein (684 aa).

The Helicase ATP-binding domain occupies 54–239; the sequence is LKYLYNKKDV…LLFNRDFEVV (186 aa). 67–74 lines the ATP pocket; it reads TSTASGKS. The DEVH box motif lies at 181 to 184; that stretch reads DELH. The Helicase C-terminal domain maps to 264 to 419; the sequence is LLRRLIENLV…YMPVNIKNRF (156 aa).

Belongs to the helicase family.

This is an uncharacterized protein from Methanocaldococcus jannaschii (strain ATCC 43067 / DSM 2661 / JAL-1 / JCM 10045 / NBRC 100440) (Methanococcus jannaschii).